Here is a 498-residue protein sequence, read N- to C-terminus: Type VI secretion system sheath protein TssC1 (498 aa).

In terms of assembly, forms a heterodimer with TssB1. Heterodimers assemble to form the sheath of the T6SS machinery. Interacts with TssA1.

Its function is as follows. Core component of the H1 type VI (H1-T6SS) secretion system that plays a role in the release of toxins targeting both eukaryotic and prokaryotic species. Forms the sheath of the structure by assembling into tubules together with TssB1 resulting in the stacking of cogwheel-like structures showing predominantly a 12-fold symmetry. The sheath contracts to provide the energy needed for effector delivery. This is Type VI secretion system sheath protein TssC1 from Pseudomonas aeruginosa (strain ATCC 15692 / DSM 22644 / CIP 104116 / JCM 14847 / LMG 12228 / 1C / PRS 101 / PAO1).